A 340-amino-acid polypeptide reads, in one-letter code: Anthranilate phosphoribosyltransferase (340 aa).

5-phospho-alpha-D-ribose 1-diphosphate contacts are provided by residues G80, 83–84, T88, 90–93, 108–116, and S120; these read GD, NIST, and KHGNRAMSS. Position 80 (G80) interacts with anthranilate. S92 contacts Mg(2+). Residue N111 coordinates anthranilate. R166 contacts anthranilate. 2 residues coordinate Mg(2+): D225 and E226.

This sequence belongs to the anthranilate phosphoribosyltransferase family. Homodimer. Requires Mg(2+) as cofactor.

It carries out the reaction N-(5-phospho-beta-D-ribosyl)anthranilate + diphosphate = 5-phospho-alpha-D-ribose 1-diphosphate + anthranilate. It participates in amino-acid biosynthesis; L-tryptophan biosynthesis; L-tryptophan from chorismate: step 2/5. Functionally, catalyzes the transfer of the phosphoribosyl group of 5-phosphorylribose-1-pyrophosphate (PRPP) to anthranilate to yield N-(5'-phosphoribosyl)-anthranilate (PRA). The sequence is that of Anthranilate phosphoribosyltransferase from Chloroflexus aggregans (strain MD-66 / DSM 9485).